The primary structure comprises 644 residues: Acetyl-coenzyme A synthetase (644 aa).

CoA contacts are provided by residues 190-193 (RGSK) and Thr-308. ATP contacts are provided by residues 384-386 (GEP), 408-413 (DTWWQT), Asp-497, and Arg-512. Ser-520 is a CoA binding site. Residue Arg-523 participates in ATP binding. The Mg(2+) site is built by Val-534, His-536, and Val-539. A CoA-binding site is contributed by Arg-581. Lys-606 bears the N6-acetyllysine mark.

It belongs to the ATP-dependent AMP-binding enzyme family. Mg(2+) serves as cofactor. Acetylated. Deacetylation by the SIR2-homolog deacetylase activates the enzyme.

It carries out the reaction acetate + ATP + CoA = acetyl-CoA + AMP + diphosphate. Functionally, catalyzes the conversion of acetate into acetyl-CoA (AcCoA), an essential intermediate at the junction of anabolic and catabolic pathways. AcsA undergoes a two-step reaction. In the first half reaction, AcsA combines acetate with ATP to form acetyl-adenylate (AcAMP) intermediate. In the second half reaction, it can then transfer the acetyl group from AcAMP to the sulfhydryl group of CoA, forming the product AcCoA. The sequence is that of Acetyl-coenzyme A synthetase from Magnetococcus marinus (strain ATCC BAA-1437 / JCM 17883 / MC-1).